The sequence spans 764 residues: 5-methyltetrahydropteroyltriglutamate--homocysteine methyltransferase (764 aa).

Residues 16-19 (RELK) and Lys112 each bind 5-methyltetrahydropteroyltri-L-glutamate. Residues 431–433 (IGS) and Glu484 each bind L-homocysteine. Residues 431-433 (IGS) and Glu484 each bind L-methionine. Residues 515–516 (RC) and Trp561 contribute to the 5-methyltetrahydropteroyltri-L-glutamate site. Residue Asp599 participates in L-homocysteine binding. Residue Asp599 coordinates L-methionine. A 5-methyltetrahydropteroyltri-L-glutamate-binding site is contributed by Glu605. Residues His641, Cys643, and Glu665 each coordinate Zn(2+). The Proton donor role is filled by His694. Residue Cys726 participates in Zn(2+) binding.

Belongs to the vitamin-B12 independent methionine synthase family. Zn(2+) is required as a cofactor.

The enzyme catalyses 5-methyltetrahydropteroyltri-L-glutamate + L-homocysteine = tetrahydropteroyltri-L-glutamate + L-methionine. The protein operates within amino-acid biosynthesis; L-methionine biosynthesis via de novo pathway; L-methionine from L-homocysteine (MetE route): step 1/1. Catalyzes the transfer of a methyl group from 5-methyltetrahydrofolate to homocysteine resulting in methionine formation. In Paraburkholderia xenovorans (strain LB400), this protein is 5-methyltetrahydropteroyltriglutamate--homocysteine methyltransferase.